The chain runs to 172 residues: Disulfide bond formation protein B (172 aa).

Residues 1–11 (MNPFRWSFRAQ) lie on the Cytoplasmic side of the membrane. The chain crosses the membrane as a helical span at residues 12–28 (FLLGFLACAGLLAYAIY). The Periplasmic segment spans residues 29–46 (VQLHLGLEPCPLCIFQRI). Residues Cys38 and Cys41 are joined by a disulfide bond. The helical transmembrane segment at 47-63 (AFAALAMFFLLGALHGP) threads the bilayer. Topologically, residues 64-70 (RAAAGRK) are cytoplasmic. The helical transmembrane segment at 71–88 (VYGVLSFIAAGVGMGIAA) threads the bilayer. Over 89–145 (RHVWVQIRPKDMMSSCGPPLSFLSETMGPFEVFRTVLTGTGDCGNIDWRFLGLSMPM) the chain is Periplasmic. A disulfide bond links Cys104 and Cys131. The helical transmembrane segment at 146 to 164 (WSMVWFVGLALWALYAGFK) threads the bilayer. The Cytoplasmic portion of the chain corresponds to 165-172 (ARRSSVHH).

Belongs to the DsbB family.

It is found in the cell inner membrane. Its function is as follows. Required for disulfide bond formation in some periplasmic proteins. Acts by oxidizing the DsbA protein. The sequence is that of Disulfide bond formation protein B from Xanthomonas euvesicatoria pv. vesicatoria (strain 85-10) (Xanthomonas campestris pv. vesicatoria).